The chain runs to 213 residues: Large ribosomal subunit protein uL1 (213 aa).

Belongs to the universal ribosomal protein uL1 family. As to quaternary structure, part of the 50S ribosomal subunit.

Functionally, binds directly to 23S rRNA. Probably involved in E site tRNA release. In terms of biological role, protein L1 is also a translational repressor protein, it controls the translation of its operon by binding to its mRNA. This is Large ribosomal subunit protein uL1 from Methanococcus maripaludis (strain DSM 14266 / JCM 13030 / NBRC 101832 / S2 / LL).